The chain runs to 466 residues: MSIASIASVFKGDFAPGTEITVRGWVRTRRDSKAGISFLAVYDGSCFDAIQGVVPNALSNYNDEVLKLTAGCSVEMTGNLVESPGSGQAFELQATAVKVTGWVDDPDTYPMAAKRHSIEHLRDVAHLRPRTNIIGAVARVRNCLSQAIHRFYHENGFIWVSTPIITASDCEGAGEMFRVSTLDMENLPRTDAGKVDYDQDFFGKEAFLTVSGQLNGETYACALSKIYTFGPTFRAENSNTSRHLAEFWMVEPEVAFADLNDIAGLAESMLKYCFNAVLQERMDDMKFFAERVDGSVIDRLQSFVSSDFAQVDYTDAVEILQNCGKTFEYPVEWGIDLQSEHERYLAEEHFKAPVVVKNYPKDIKAFYMRLNEDGKTVAAMDVLAPGIGEIIGGSQREERLDVLDARLEEMNLSKEDYWWYRDLRRYGTVPHAGFGLGFERLVSYVTGVGNIRDVIPFPRAPRSANF.

The protein belongs to the class-II aminoacyl-tRNA synthetase family. In terms of assembly, homodimer.

It is found in the cytoplasm. The catalysed reaction is tRNA(Asn) + L-asparagine + ATP = L-asparaginyl-tRNA(Asn) + AMP + diphosphate + H(+). This chain is Asparagine--tRNA ligase, found in Shewanella amazonensis (strain ATCC BAA-1098 / SB2B).